We begin with the raw amino-acid sequence, 631 residues long: 1-deoxy-D-xylulose-5-phosphate synthase (631 aa).

A disordered region spans residues 1 to 21 (MPTTFHEIPRERPLTPLLDSA). Thiamine diphosphate contacts are provided by residues H87 and 128–130 (GHS). D159 contacts Mg(2+). Thiamine diphosphate is bound by residues 160-161 (GA), N188, F295, and E377. N188 provides a ligand contact to Mg(2+).

The protein belongs to the transketolase family. DXPS subfamily. In terms of assembly, homodimer. Mg(2+) is required as a cofactor. It depends on thiamine diphosphate as a cofactor.

The enzyme catalyses D-glyceraldehyde 3-phosphate + pyruvate + H(+) = 1-deoxy-D-xylulose 5-phosphate + CO2. The protein operates within metabolic intermediate biosynthesis; 1-deoxy-D-xylulose 5-phosphate biosynthesis; 1-deoxy-D-xylulose 5-phosphate from D-glyceraldehyde 3-phosphate and pyruvate: step 1/1. Its function is as follows. Catalyzes the acyloin condensation reaction between C atoms 2 and 3 of pyruvate and glyceraldehyde 3-phosphate to yield 1-deoxy-D-xylulose-5-phosphate (DXP). The polypeptide is 1-deoxy-D-xylulose-5-phosphate synthase (Ectopseudomonas mendocina (strain ymp) (Pseudomonas mendocina)).